Reading from the N-terminus, the 186-residue chain is Large ribosomal subunit protein uL5 (186 aa).

The protein belongs to the universal ribosomal protein uL5 family. As to quaternary structure, part of the 50S ribosomal subunit; part of the 5S rRNA/L5/L18/L25 subcomplex. Contacts the 5S rRNA and the P site tRNA. Forms a bridge to the 30S subunit in the 70S ribosome.

Its function is as follows. This is one of the proteins that bind and probably mediate the attachment of the 5S RNA into the large ribosomal subunit, where it forms part of the central protuberance. In the 70S ribosome it contacts protein S13 of the 30S subunit (bridge B1b), connecting the 2 subunits; this bridge is implicated in subunit movement. Contacts the P site tRNA; the 5S rRNA and some of its associated proteins might help stabilize positioning of ribosome-bound tRNAs. The chain is Large ribosomal subunit protein uL5 from Cereibacter sphaeroides (strain ATCC 17029 / ATH 2.4.9) (Rhodobacter sphaeroides).